We begin with the raw amino-acid sequence, 307 residues long: tRNA pseudouridine synthase B (307 aa).

Asp48 (nucleophile) is an active-site residue.

It belongs to the pseudouridine synthase TruB family. Type 1 subfamily.

It carries out the reaction uridine(55) in tRNA = pseudouridine(55) in tRNA. Functionally, responsible for synthesis of pseudouridine from uracil-55 in the psi GC loop of transfer RNAs. The sequence is that of tRNA pseudouridine synthase B from Neisseria meningitidis serogroup B (strain ATCC BAA-335 / MC58).